A 140-amino-acid chain; its full sequence is MLKTISPLISPELLKVLAEMGHGDEIIFSDAHFPAHSMGPQVIRADGLLVSDLLQAIIPLFELDSYAPPLVMMAAVEGDTLDPEVERRYRNALSLQAPCPDIIRINRFAFYERAQKAFAIVITGERAKYGNILLKKGVTP.

Residue His22 is the Proton donor of the active site. Residues Asp30, Arg107, and 129 to 131 contribute to the substrate site; that span reads YGN.

The protein belongs to the RbsD / FucU family. FucU mutarotase subfamily. Homodecamer.

It localises to the cytoplasm. The catalysed reaction is alpha-L-fucose = beta-L-fucose. It participates in carbohydrate metabolism; L-fucose metabolism. In terms of biological role, involved in the anomeric conversion of L-fucose. This is L-fucose mutarotase from Shigella boydii serotype 18 (strain CDC 3083-94 / BS512).